The following is a 171-amino-acid chain: Adenine phosphoribosyltransferase (171 aa).

The protein belongs to the purine/pyrimidine phosphoribosyltransferase family. As to quaternary structure, homodimer.

The protein resides in the cytoplasm. The enzyme catalyses AMP + diphosphate = 5-phospho-alpha-D-ribose 1-diphosphate + adenine. Its pathway is purine metabolism; AMP biosynthesis via salvage pathway; AMP from adenine: step 1/1. Its function is as follows. Catalyzes a salvage reaction resulting in the formation of AMP, that is energically less costly than de novo synthesis. In Syntrophotalea carbinolica (strain DSM 2380 / NBRC 103641 / GraBd1) (Pelobacter carbinolicus), this protein is Adenine phosphoribosyltransferase.